The primary structure comprises 538 residues: Cytochrome P450 monooxygenase cfoH (538 aa).

The helical transmembrane segment at 24 to 44 (VLTFFAILLVAILLWYMIPYF) threads the bilayer. Cysteine 471 contributes to the heme binding site.

It belongs to the cytochrome P450 family. It depends on heme as a cofactor.

The protein resides in the membrane. Its pathway is secondary metabolite biosynthesis; flavonoid biosynthesis. Its function is as follows. Cytochrome P450 monooxygenase; part of the gene cluster that mediates the biosynthesis of chlorflavonin, a fungal flavonoid with acetolactate synthase inhibitory activity. Within the pathway, cfoH is responsible for the hydroxylation of the flavonoid skeleton at position C2'. The pathway begins with the PKS-NRPS hybrid synthetase cfoA that uses benzoic acid or p-hydroxybenzoic acid as a starter unit with four rounds of chain elongation using malonyl-CoA to form the chalcone skeleton. Then, a new type of chalcone isomerase, cfoK, catalyzes the conversion of the chalcone into a flavanone by a histidine-mediated oxa-Michael addition mechanism. The desaturation of flavanone to flavone is catalyzed by a new type of flavone synthase, the flavin mononucleotide (FMN)-dependent oxidoreductase cfoJ. Monooxygenases cfoF, cfoG, and P450 cfoH are responsible for the hydroxylation of the flavonoid skeleton at sites C3, C8, and C2', respectively. Like cfoF, the dehydratase cfoI plays also a role in the hydroxylation of position C3. Methyltransferases cfoB, cfoC, and cfoD then catalyze the methylation of C7-OH, C8-OH, and C3-OH, respectively. Finally, the monooxygenase cfoE is responsible for the chlorination of flavonoid at position C3'. The polypeptide is Cytochrome P450 monooxygenase cfoH (Aspergillus candidus).